We begin with the raw amino-acid sequence, 695 residues long: Elongation factor G 1 (695 aa).

Positions 6 to 284 (SKVRNIGISA…AVETYLPCPT (279 aa)) constitute a tr-type G domain. GTP-binding positions include 15-22 (AHIDSGKT), 82-86 (DTPGH), and 136-139 (NKCD).

The protein belongs to the TRAFAC class translation factor GTPase superfamily. Classic translation factor GTPase family. EF-G/EF-2 subfamily.

It is found in the cytoplasm. Its function is as follows. Catalyzes the GTP-dependent ribosomal translocation step during translation elongation. During this step, the ribosome changes from the pre-translocational (PRE) to the post-translocational (POST) state as the newly formed A-site-bound peptidyl-tRNA and P-site-bound deacylated tRNA move to the P and E sites, respectively. Catalyzes the coordinated movement of the two tRNA molecules, the mRNA and conformational changes in the ribosome. The protein is Elongation factor G 1 of Desulfotalea psychrophila (strain LSv54 / DSM 12343).